Consider the following 427-residue polypeptide: Adenylosuccinate synthetase (427 aa).

Residues 12 to 18 and 40 to 42 each bind GTP; these read GDEGKGK and GHT. Asp13 functions as the Proton acceptor in the catalytic mechanism. Residues Asp13 and Gly40 each contribute to the Mg(2+) site. IMP contacts are provided by residues 13-16, 38-41, Thr128, Arg142, Gln223, Thr238, and Arg302; these read DEGK and NAGH. His41 (proton donor) is an active-site residue. 298 to 304 is a binding site for substrate; that stretch reads TTTGRAR. Residues Arg304, 330–332, and 412–414 each bind GTP; these read KLD and AVG.

The protein belongs to the adenylosuccinate synthetase family. Homodimer. The cofactor is Mg(2+).

The protein resides in the cytoplasm. The catalysed reaction is IMP + L-aspartate + GTP = N(6)-(1,2-dicarboxyethyl)-AMP + GDP + phosphate + 2 H(+). The protein operates within purine metabolism; AMP biosynthesis via de novo pathway; AMP from IMP: step 1/2. Its function is as follows. Plays an important role in the de novo pathway of purine nucleotide biosynthesis. Catalyzes the first committed step in the biosynthesis of AMP from IMP. This Desulfitobacterium hafniense (strain DSM 10664 / DCB-2) protein is Adenylosuccinate synthetase.